Reading from the N-terminus, the 970-residue chain is Type III restriction-modification enzyme EcoPI Res subunit (970 aa).

The segment at 75–540 (ARSNVIDVSM…EVGRGLRLPV (466 aa)) is helicase-like domain. The tract at residues 894–918 (TYSPDFAYVVKTAEGDYLNFIIETK) is endonuclease domain.

It belongs to the type III restriction-modification system Res protein family. A heterotetramer with stoichiometry Res(2)Mod(2). Requires Mg(2+) as cofactor. The cofactor is S-adenosyl-L-methionine.

The catalysed reaction is Endonucleolytic cleavage of DNA to give specific double-stranded fragments with terminal 5'-phosphates.. Functionally, a type III restriction enzyme that recognizes 2 inversely oriented double-stranded sequences 5'-AGACC-3' and cleaves DNA 25-27 base pairs downstream of one site, producing a single-strand 5' protrusion of two nucleotides. DNA restriction requires both the Res and Mod subunits. DNA topology affects its action; relaxed and negatively supercoiled DNA are digested but positively supercoiled DNA is not a good substrate. After binding to one recognition site undergoes random one-dimensional diffusion along DNA until it collides with a stationary enzyme bound to the second DNA site, which is when DNA cleavage occurs. The protein is Type III restriction-modification enzyme EcoPI Res subunit of Enterobacteriaceae (Bacteriophage P1).